The sequence spans 386 residues: 1-deoxy-D-xylulose 5-phosphate reductoisomerase (386 aa).

Residues Thr7, Gly8, Ser9, Ile10, Ala33, and Asn124 each coordinate NADPH. Lys125 lines the 1-deoxy-D-xylulose 5-phosphate pocket. Residue Glu126 coordinates NADPH. Residue Asp148 coordinates Mn(2+). 1-deoxy-D-xylulose 5-phosphate is bound by residues Ser149, Glu150, Ser174, and His197. Glu150 provides a ligand contact to Mn(2+). Gly203 is an NADPH binding site. Positions 210, 215, 216, and 219 each coordinate 1-deoxy-D-xylulose 5-phosphate. Glu219 provides a ligand contact to Mn(2+).

It belongs to the DXR family. It depends on Mg(2+) as a cofactor. Mn(2+) serves as cofactor.

It carries out the reaction 2-C-methyl-D-erythritol 4-phosphate + NADP(+) = 1-deoxy-D-xylulose 5-phosphate + NADPH + H(+). Its pathway is isoprenoid biosynthesis; isopentenyl diphosphate biosynthesis via DXP pathway; isopentenyl diphosphate from 1-deoxy-D-xylulose 5-phosphate: step 1/6. In terms of biological role, catalyzes the NADPH-dependent rearrangement and reduction of 1-deoxy-D-xylulose-5-phosphate (DXP) to 2-C-methyl-D-erythritol 4-phosphate (MEP). The sequence is that of 1-deoxy-D-xylulose 5-phosphate reductoisomerase from Kitasatospora griseola (Streptomyces griseolosporeus).